Consider the following 118-residue polypeptide: EVQLQQSGPELVKPGASVKISCKASGYTFTDYYMNWVKQSHGKSLEWIGDINPNNGGTSYNQKFKGKATLTVDKSSSATYMELRSLTSEDSAVYYCARGYGYDPFDVWGTGTTVTVSS.

A v segment region spans residues 1–98 (EVQLQQSGPE…EDSAVYYCAR (98 aa)). Residues cysteine 22 and cysteine 96 are joined by a disulfide bond. Residues 99–104 (GYGYDP) form a d segment region. The interval 105-118 (FDVWGTGTTVTVSS) is j segment.

This is Ig heavy chain V region AC38 205.12 from Mus musculus (Mouse).